A 364-amino-acid polypeptide reads, in one-letter code: Methylthioribose-1-phosphate isomerase (364 aa).

Residues 53-55 (RGA), R90, and Q203 each bind substrate. D244 acts as the Proton donor in catalysis. 254-255 (NK) is a substrate binding site.

The protein belongs to the eIF-2B alpha/beta/delta subunits family. MtnA subfamily.

The enzyme catalyses 5-(methylsulfanyl)-alpha-D-ribose 1-phosphate = 5-(methylsulfanyl)-D-ribulose 1-phosphate. The protein operates within amino-acid biosynthesis; L-methionine biosynthesis via salvage pathway; L-methionine from S-methyl-5-thio-alpha-D-ribose 1-phosphate: step 1/6. In terms of biological role, catalyzes the interconversion of methylthioribose-1-phosphate (MTR-1-P) into methylthioribulose-1-phosphate (MTRu-1-P). In Brucella anthropi (strain ATCC 49188 / DSM 6882 / CCUG 24695 / JCM 21032 / LMG 3331 / NBRC 15819 / NCTC 12168 / Alc 37) (Ochrobactrum anthropi), this protein is Methylthioribose-1-phosphate isomerase.